The sequence spans 334 residues: Ornithine carbamoyltransferase (334 aa).

Carbamoyl phosphate-binding positions include Ser-57–Thr-60, Gln-84, Arg-108, and His-135–Gln-138. L-ornithine is bound by residues Asn-169, Asp-233, and Ser-237–Met-238. Residues Cys-275–Leu-276 and Arg-320 contribute to the carbamoyl phosphate site.

The protein belongs to the aspartate/ornithine carbamoyltransferase superfamily. OTCase family. Homotrimer.

The protein localises to the cytoplasm. It catalyses the reaction carbamoyl phosphate + L-ornithine = L-citrulline + phosphate + H(+). The protein operates within amino-acid biosynthesis; L-arginine biosynthesis; L-arginine from L-ornithine and carbamoyl phosphate: step 1/3. Its function is as follows. Reversibly catalyzes the transfer of the carbamoyl group from carbamoyl phosphate (CP) to the N(epsilon) atom of ornithine (ORN) to produce L-citrulline. The sequence is that of Ornithine carbamoyltransferase from Vibrio vulnificus (strain CMCP6).